The chain runs to 514 residues: Palmitoyltransferase pfa3 (514 aa).

The Cytoplasmic segment spans residues 1-31 (MATLAMSTPSSPTWPKRRPKAWAMRCERYCC). The chain crosses the membrane as a helical span at residues 32-52 (AAASYFPLAFVYSLTTWAVYV). Topologically, residues 53–64 (EASVGLKPSSSS) are lumenal. Residues 65–85 (WIGLPSSILGVVLYLALNISY) form a helical membrane-spanning segment. Over 86 to 174 (TTAVFTDPGS…TCVGLRNYKA (89 aa)) the chain is Cytoplasmic. The 51-residue stretch at 130–180 (RFCKKCQCPKPDRAHHCSTCKRCVLKMDHHCPWLATCVGLRNYKAFLLFLI) folds into the DHHC domain. Residues 175–195 (FLLFLIYTSLFCWVDFGVSAI) form a helical membrane-spanning segment. Residues 196 to 209 (WIWTEVFNDTRYMD) are Lumenal-facing. A helical transmembrane segment spans residues 210–230 (GILPVNVVLLSILGGIIGLVL). Topologically, residues 231–514 (TGFTAWHISL…SREDDWRDWD (284 aa)) are cytoplasmic. Disordered regions lie at residues 307 to 336 (VTRPEEGEESSDNLTPAQQALSRSYADLER) and 436 to 514 (GNEL…RDWD). Positions 318–328 (DNLTPAQQALS) are enriched in polar residues. Over residues 505 to 514 (SREDDWRDWD) the composition is skewed to basic and acidic residues.

This sequence belongs to the DHHC palmitoyltransferase family. PFA3 subfamily. Autopalmitoylated.

It localises to the vacuole membrane. The catalysed reaction is L-cysteinyl-[protein] + hexadecanoyl-CoA = S-hexadecanoyl-L-cysteinyl-[protein] + CoA. Functionally, palmitoyltransferase specific for VAC8. Palmitoylates VAC8 at one or more of its N-terminal cysteine residues, which is required for its proper membrane localization. The protein is Palmitoyltransferase pfa3 (pfa3) of Emericella nidulans (strain FGSC A4 / ATCC 38163 / CBS 112.46 / NRRL 194 / M139) (Aspergillus nidulans).